The following is a 508-amino-acid chain: MLLPMLVSIPFFGGFLCLLFNQKNAKISYYLALTSMALVFILSLILLFNTINVIVSSISNSSWSFEYIVPWIEKFGISFHLAVDRLSILMLNLTSILGLVSVFCSWKKVQKNIGLFYFGLLWTLGSIIGIFISVDLFLFFCFWELSVLPTYFLMIMWGYKDNDRKFYYNNIFSANKFFIYSQISGLVLLLSTLVLVYTHYIYDHILTFDYDVLKHTSMNIVLESCIMLGFFLAFAIKIPIVPFHSWLPDFHCYSPVIGVVDISGILLKTSIYALMRFNIPLFPHSTEIFSSIIMFFGIITIFYGAIVSLFQNNIKRFIAYVSISHMGFILIAIYSINQVAYQGAIIQLISYSLSTAALFLLSGHVFKSISTFDIDKMGGLWSKLRWIPGFLLIFSIINLGVPGTGNFVGEFMIFMGCFNSHLMIVILSIFSLILLALCSLMFVQKICFGPINNRYDFLCDLNVMTICDFLIFVFLLVLILIIGLYPNIIIDVSYSPLCSIRNIFSNFI.

Transmembrane regions (helical) follow at residues 1 to 21, 36 to 56, 63 to 83, 86 to 106, 113 to 133, 136 to 156, 177 to 197, 220 to 240, 255 to 275, 288 to 308, 317 to 337, 343 to 363, 389 to 409, 423 to 443, and 470 to 490; these read MLLPMLVSIPFFGGFLCLLFN, MALVFILSLILLFNTINVIVS, WSFEYIVPWIEKFGISFHLAV, LSILMLNLTSILGLVSVFCSW, IGLFYFGLLWTLGSIIGIFIS, LFLFFCFWELSVLPTYFLMIM, FFIYSQISGLVLLLSTLVLVY, IVLESCIMLGFFLAFAIKIPI, PVIGVVDISGILLKTSIYALM, IFSSIIMFFGIITIFYGAIVS, FIAYVSISHMGFILIAIYSIN, GAIIQLISYSLSTAALFLLSG, GFLLIFSIINLGVPGTGNFVG, MIVILSIFSLILLALCSLMFV, and LIFVFLLVLILIIGLYPNIII.

The protein belongs to the complex I subunit 4 family. As to quaternary structure, composed of 13 different subunits. Subunits NuoA, H, J, K, L, M, N constitute the membrane sector of the complex.

The protein resides in the cell membrane. The catalysed reaction is a quinone + NADH + 5 H(+)(in) = a quinol + NAD(+) + 4 H(+)(out). Its function is as follows. NDH-1 shuttles electrons from NADH, via FMN and iron-sulfur (Fe-S) centers, to quinones in the respiratory chain. Couples the redox reaction to proton translocation (for every two electrons transferred, four hydrogen ions are translocated across the cytoplasmic membrane), and thus conserves the redox energy in a proton gradient. This Buchnera aphidicola subsp. Baizongia pistaciae (strain Bp) protein is NADH-quinone oxidoreductase subunit M (nuoM).